Here is an 867-residue protein sequence, read N- to C-terminus: Probable potassium transporter 15 (867 aa).

Low complexity predominate over residues 1-13; that stretch reads MAASSSSSASASA. The segment at 1-88 is disordered; sequence MAASSSSSAS…EGEGEDGEKQ (88 aa). Topologically, residues 1 to 124 are cytoplasmic; sequence MAASSSSSAS…DSEEFDFGRT (124 aa). The segment covering 32–44 has biased composition (acidic residues); it reads TEEDDEGEEDGDT. Positions 45 to 54 are enriched in low complexity; it reads VEAAAAAVGA. A compositionally biased stretch (acidic residues) spans 63–84; it reads SEEEEDEEDGGGGGEGEGEGED. A helical membrane pass occupies residues 125–145; sequence MFLALQTLAVVFGDIGISPLY. Residues 146 to 167 lie on the Extracellular side of the membrane; sequence TFDVMFSKYPILGEEDVLGALS. The helical transmembrane segment at 168-188 threads the bilayer; sequence LVLYTLISMPLVKYVLVVLWA. Residues 189 to 252 are Cytoplasmic-facing; it reads NDDGEGGIFA…KLESSLLLKK (64 aa). Residues 253 to 273 form a helical membrane-spanning segment; sequence LLLGLVLFGTAMFISNGVITP. The Extracellular portion of the chain corresponds to 274 to 285; that stretch reads AMSVLSAVSGLK. The chain crosses the membrane as a helical span at residues 286 to 306; that stretch reads VGIPNASQGLVVMISVVLLVI. Residues 307 to 317 lie on the Cytoplasmic side of the membrane; that stretch reads LYSVQRYATSK. Residues 318–338 traverse the membrane as a helical segment; it reads MGFALGPSLLIWFCCLGGIGI. The Extracellular portion of the chain corresponds to 339–365; it reads YNLSTYGPAAFKAFNPLYIIYYFGRNP. N-linked (GlcNAc...) asparagine glycosylation occurs at Asn-340. Residues 366–386 form a helical membrane-spanning segment; the sequence is FQAWLSLAGCLLCATGSEAIF. Residues 387–400 are Cytoplasmic-facing; sequence ANLSYFPVRYVQSM. A helical transmembrane segment spans residues 401–421; the sequence is FALLVLPCLVLAYLGQGAFLI. At 422-433 the chain is on the extracellular side; sequence ANQNSSEQIFFS. An N-linked (GlcNAc...) asparagine glycan is attached at Asn-425. The helical transmembrane segment at 434 to 454 threads the bilayer; the sequence is SIPSGVFWPVFLIANLAALIA. At 455–490 the chain is on the cytoplasmic side; the sequence is SRTMTTAIFQCLKQSIALGCFPRLKIIHTSRKFMAK. The helical transmembrane segment at 491 to 511 threads the bilayer; the sequence is IYIPVVNWFLLFSCLGFILLF. The Extracellular segment spans residues 512 to 522; it reads RSIYDVGNAYA. Residues 523 to 543 traverse the membrane as a helical segment; sequence IAELGVMIMATVYVTIIMLLI. Topologically, residues 544–545 are cytoplasmic; that stretch reads WE. Residues 546 to 566 form a helical membrane-spanning segment; that stretch reads TSIVKVLSFVITFLSLELVFF. At 567 to 572 the chain is on the extracellular side; sequence SSSLSS. The chain crosses the membrane as a helical span at residues 573-593; that stretch reads VGDGGWALIIFASGILMVMFI. Over 594–867 the chain is Cytoplasmic; that stretch reads WNYGSKLKYD…VMQVRLTSYV (274 aa).

The protein belongs to the HAK/KUP transporter (TC 2.A.72.3) family.

Its subcellular location is the membrane. Functionally, high-affinity potassium transporter. The protein is Probable potassium transporter 15 (HAK15) of Oryza sativa subsp. japonica (Rice).